Consider the following 169-residue polypeptide: Putative prolyl-tRNA synthetase associated domain-containing protein 1 (169 aa).

Belongs to the PRORSD1 family.

The sequence is that of Putative prolyl-tRNA synthetase associated domain-containing protein 1 (PRORSD1P) from Homo sapiens (Human).